The chain runs to 1106 residues: Zinc finger protein GLI1 (1106 aa).

The segment at 1-20 (MFNSMTPPPISSYGEPCCLR) is SNAG domain. The interaction with SUFU stretch occupies residues 120–124 (SYGHL). C2H2-type zinc fingers lie at residues 235–260 (TDCRWDGCSQEFDSQEQLVHHINSEH), 268–295 (FVCHWGGCSRELRPFKAQYMLVVHMRRH), 301–325 (HKCTFEGCRKSYSRLENLKTHLRSH), 331–356 (YMCEHEGCSKAFSNASDRAKHQNRTH), and 362–387 (YVCKLPGCTKRYTDPSSLRKHVKTVH). The tract at residues 283-291 (KAQYMLVVH) is interaction with DNA. 2 interaction with DNA regions span residues 345–350 (ASDRAK) and 375–381 (DPSSLRK). 5 disordered regions span residues 375 to 485 (DPSS…DEGP), 516 to 580 (GLKL…SLPG), 732 to 792 (YGGP…LYPG), 817 to 889 (EQGC…PTHS), and 914 to 942 (GREDAPAQEPSYQSPKFLGGSQVSPSRAK). Positions 413–428 (EPKREREGGPIREESR) are enriched in basic and acidic residues. Residues 442–463 (PGAQSSCSSDHSPAGSAANTDS) show a composition bias toward polar residues. Lysine 518 carries the post-translational modification N6-acetyllysine. Composition is skewed to low complexity over residues 544–560 (SSSSSISSAYTVSRRSS) and 737–753 (GAAAEPYGARGPGSLPL). Pro residues predominate over residues 754–766 (GPGPPTNYGPNPC). Residues 768 to 779 (QQASYPDPTQET) are compositionally biased toward polar residues. Lysine 1003 is covalently cross-linked (Glycyl lysine isopeptide (Lys-Gly) (interchain with G-Cter in SUMO2)). Residues 1054–1087 (DEPQGLSPPPSHDQRGSSGHTPPPSGPPNMAVGN) are disordered.

Belongs to the GLI C2H2-type zinc-finger protein family. Interacts with KIF7. Interacts with STK36. Interacts with ZIC1; the interaction enhances transcription activation. Interacts with SUFU; this inhibits transcriptional activation by GLI1. In terms of processing, phosphorylated in vitro by ULK3. Acetylation at Lys-518 down-regulates transcriptional activity. Deacetylated by HDAC1. Post-translationally, ubiquitinated by the CRL2(FEM1B) complex, suppressing GLI1 transcriptional activator activity. Detected in testis (at protein level). Testis, myometrium and fallopian tube. Also expressed in the brain with highest expression in the cerebellum, optic nerve and olfactory tract. Isoform 1 is detected in brain, spleen, pancreas, liver, kidney and placenta; isoform 2 is not detectable in these tissues.

The protein resides in the cytoplasm. Its subcellular location is the nucleus. Functionally, acts as a transcriptional activator. Binds to the DNA consensus sequence 5'-GACCACCCA-3'. Regulates the transcription of specific genes during normal development. Plays a role in craniofacial development and digital development, as well as development of the central nervous system and gastrointestinal tract. Mediates SHH signaling. Plays a role in cell proliferation and differentiation via its role in SHH signaling. Its function is as follows. Acts as a transcriptional activator, but activates a different set of genes than isoform 1. Activates expression of CD24, unlike isoform 1. Mediates SHH signaling. Promotes cancer cell migration. This chain is Zinc finger protein GLI1 (GLI1), found in Homo sapiens (Human).